We begin with the raw amino-acid sequence, 290 residues long: MRLSIKAPAKINLSLDVLYKRPDGYHEVKMVMTTIDLADRIELVALPEEDAIRIVSQNRFVPDDCRNLAYQAAKLLKETFSIRQGVAISITKHIPVAAGLAGGSSNAAATLRGLNKLWQLGLTLDELAELGAKIGSDVAFCVYGGTALATGRGEIITPIPSPPPCWVVLAKPPIGVSTAEVYRNLELERVSHPDVDAMVRAIERQDYAAICRLVGNVLEEVTLKKYPEVAHIKEQMKRFGADAVLMSGSGPTVFGLIEHDSRMQRVYNGLRGFCDQVFAVRMLGERHSLD.

Lysine 10 is an active-site residue. ATP is bound at residue 95–105 (PVAAGLAGGSS). The active site involves aspartate 137.

The protein belongs to the GHMP kinase family. IspE subfamily.

It carries out the reaction 4-CDP-2-C-methyl-D-erythritol + ATP = 4-CDP-2-C-methyl-D-erythritol 2-phosphate + ADP + H(+). The protein operates within isoprenoid biosynthesis; isopentenyl diphosphate biosynthesis via DXP pathway; isopentenyl diphosphate from 1-deoxy-D-xylulose 5-phosphate: step 3/6. Its function is as follows. Catalyzes the phosphorylation of the position 2 hydroxy group of 4-diphosphocytidyl-2C-methyl-D-erythritol. This chain is 4-diphosphocytidyl-2-C-methyl-D-erythritol kinase, found in Geobacillus kaustophilus (strain HTA426).